A 378-amino-acid polypeptide reads, in one-letter code: Poly(3-hydroxyalkanoate) polymerase subunit PhaC (378 aa).

Residues 84-356 enclose the AB hydrolase-1 domain; that stretch reads PVLIVYALVN…QSFPVGHIGM (273 aa).

It belongs to the PHA/PHB synthase family. Type III PhaC subfamily. Forms a heterodimer with PhaE, which may multimerize in the presence of 3-hydroxybutyryl-CoA. Both subunits are required for PHB synthesis in E.coli and in PHA-negative A.eutrophus.

The protein localises to the cytoplasm. The enzyme catalyses (3R)-3-hydroxybutanoyl-CoA + [(3R)-hydroxybutanoate](n) = [(3R)-hydroxybutanoate](n+1) + CoA. The protein operates within biopolymer metabolism; poly-(R)-3-hydroxybutanoate biosynthesis. Its function is as follows. When expressed in E.coli with Synechocystis PhaE and C.necator PhaA and PhaB, confers the ability to synthesize up to 13% (w/w) poly(3-hydroxybutyrate) (PHB) depending on the carbon source; all 4 genes are necessary for PHB production. Cell-free in vitro coexpression with PhaE gives a heterodimer able to polymerize 3-hydroxybutyrate-CoA. The protein is Poly(3-hydroxyalkanoate) polymerase subunit PhaC of Synechocystis sp. (strain ATCC 27184 / PCC 6803 / Kazusa).